Consider the following 67-residue polypeptide: uncharacterized protein (67 aa).

This is an uncharacterized protein from Acidianus filamentous virus 2 (isolate Italy/Pozzuoli) (AFV-2).